We begin with the raw amino-acid sequence, 307 residues long: Ribosomal RNA small subunit methyltransferase H (307 aa).

S-adenosyl-L-methionine is bound by residues 33–35, Asp51, Phe82, Asp96, and Gln103; that span reads GGY.

Belongs to the methyltransferase superfamily. RsmH family.

It is found in the cytoplasm. The catalysed reaction is cytidine(1402) in 16S rRNA + S-adenosyl-L-methionine = N(4)-methylcytidine(1402) in 16S rRNA + S-adenosyl-L-homocysteine + H(+). In terms of biological role, specifically methylates the N4 position of cytidine in position 1402 (C1402) of 16S rRNA. The chain is Ribosomal RNA small subunit methyltransferase H from Rickettsia rickettsii (strain Iowa).